A 127-amino-acid chain; its full sequence is MNALYVTTVPKGYSSLSKCNHNEQDTAYRLWLCTHNHWTAPSGMRLQPLTSLGSKEMKSRWNWGSITCIICFTCVGSQLSMSSSKASNFSGPLQLYQRGIGHITNSYKRPQAPAWPCLSSGTMGRSH.

Topologically, residues 1 to 65 (MNALYVTTVP…EMKSRWNWGS (65 aa)) are extracellular. Residues 66–84 (ITCIICFTCVGSQLSMSSS) form a helical membrane-spanning segment. The Cytoplasmic portion of the chain corresponds to 85-127 (KASNFSGPLQLYQRGIGHITNSYKRPQAPAWPCLSSGTMGRSH).

In terms of tissue distribution, widely expressed with higher levels in kidney and aorta.

Its subcellular location is the cell membrane. In terms of biological role, dual receptor for both endothelin-1 and the signal sequence of vascular endothelial growth factor A. Does not act as a receptor for angiotensin-2. Does not bind the VEGFA mature protein. May play a role in angiogenesis with a significant role in cardiovascular and neural development. This is Dual endothelin-1/VEGF signal peptide receptor from Mus musculus (Mouse).